Consider the following 110-residue polypeptide: Flagellar hook-basal body complex protein FliE (110 aa).

Belongs to the FliE family.

It localises to the bacterial flagellum basal body. The sequence is that of Flagellar hook-basal body complex protein FliE from Ralstonia nicotianae (strain ATCC BAA-1114 / GMI1000) (Ralstonia solanacearum).